We begin with the raw amino-acid sequence, 305 residues long: Spore coat protein CotA (305 aa).

The protein resides in the spore coat. It is found in the spore. The protein localises to the perispore. Contributes to maintain proper thickness of the spore coat. May contribute to the formation of polar appendages. May play an important role in assembly of the outer layers of the spore coat. This is Spore coat protein CotA from Clostridioides difficile (strain 630) (Peptoclostridium difficile).